The following is a 237-amino-acid chain: Octopine transport system permease protein OccQ (237 aa).

The ABC transmembrane type-1 domain maps to 22–222 (TAMTMAVAFS…LITFVSGQVF (201 aa)). 4 consecutive transmembrane segments (helical) span residues 26 to 46 (MAVAFSGFTIGLVFGCLGAAA), 72 to 92 (LVIYLFYFGSSSVISNVASLF), 96 to 116 (GFVGASTFLIGALAIGVVSGA), and 202 to 222 (SFYLTAAALYLLITFVSGQVF).

Belongs to the binding-protein-dependent transport system permease family. HisMQ subfamily.

It localises to the cell inner membrane. Component of the octopine active transport system probably consisting of four subunits: Q, M, P and T. This is Octopine transport system permease protein OccQ (occQ) from Agrobacterium tumefaciens (strain Ach5).